We begin with the raw amino-acid sequence, 236 residues long: Three prime repair exonuclease 2 (236 aa).

The Mg(2+) site is built by D14 and E16. Substrate contacts are provided by residues 16-17 (EA) and Y122. Residue H188 is the Proton donor/acceptor of the active site. Mg(2+) is bound at residue D193. Residue D193 coordinates substrate.

This sequence belongs to the exonuclease superfamily. TREX family. Homodimer. Requires Mg(2+) as cofactor.

It is found in the nucleus. It carries out the reaction Exonucleolytic cleavage in the 3'- to 5'-direction to yield nucleoside 5'-phosphates.. Its function is as follows. Exonuclease with a preference for double-stranded DNA with mismatched 3' termini. May play a role in DNA repair. The sequence is that of Three prime repair exonuclease 2 (Trex2) from Mus musculus (Mouse).